A 74-amino-acid polypeptide reads, in one-letter code: Cytoplasmic envelopment protein 3 (74 aa).

Gly-2 carries N-myristoyl glycine; by host lipidation. The short motif at Leu-15 to Val-16 is the Di-leucine-like internalization motif element. Positions Ser-34–Ile-40 are asp/Glu-rich (acidic). A disordered region spans residues Glu-36–Tyr-74.

It belongs to the herpesviridae cytoplasmic envelopment protein 3 family. As to quaternary structure, interacts with cytoplasmic envelopment protein 2; this interaction is essential for the proper localization of each protein to the assembly complex and thus for the production of infectious virus. Myristoylation and palmitoylation (probably on one or more of the nearby cysteines at the N-terminus) enable membrane-binding and Golgi apparatus-specific targeting and are essential for efficient packaging. Post-translationally, phosphorylated. Phosphorylation does not seem to be required for recycling to the host Golgi apparatus. Packaging is selective for underphosphorylated forms.

It is found in the virion tegument. The protein resides in the virion membrane. Its subcellular location is the host cell membrane. The protein localises to the host Golgi apparatus membrane. In terms of biological role, plays an important role in the cytoplasmic envelopment of tegument proteins and capsids during the assembly and egress processes. Also participates in viral entry at the fusion step probably by regulating the core fusion machinery. The protein is Cytoplasmic envelopment protein 3 of Equine herpesvirus 1 (strain Ab4p) (EHV-1).